Here is a 346-residue protein sequence, read N- to C-terminus: Histidinol-phosphate aminotransferase (346 aa).

K209 is modified (N6-(pyridoxal phosphate)lysine).

This sequence belongs to the class-II pyridoxal-phosphate-dependent aminotransferase family. Histidinol-phosphate aminotransferase subfamily. In terms of assembly, homodimer. Requires pyridoxal 5'-phosphate as cofactor.

The catalysed reaction is L-histidinol phosphate + 2-oxoglutarate = 3-(imidazol-4-yl)-2-oxopropyl phosphate + L-glutamate. Its pathway is amino-acid biosynthesis; L-histidine biosynthesis; L-histidine from 5-phospho-alpha-D-ribose 1-diphosphate: step 7/9. The chain is Histidinol-phosphate aminotransferase from Vibrio vulnificus (strain YJ016).